The sequence spans 415 residues: Queuine tRNA-ribosyltransferase accessory subunit 2 (415 aa).

Residues Cys351, Cys353, Cys356, and His382 each contribute to the Zn(2+) site.

Belongs to the queuine tRNA-ribosyltransferase family. QTRT2 subfamily. In terms of assembly, heterodimer of a catalytic subunit qtrt1 and an accessory subunit qtrt2. The cofactor is Zn(2+).

The protein resides in the cytoplasm. It localises to the mitochondrion outer membrane. Functionally, non-catalytic subunit of the queuine tRNA-ribosyltransferase (TGT) that catalyzes the base-exchange of a guanine (G) residue with queuine (Q) at position 34 (anticodon wobble position) in tRNAs with GU(N) anticodons (tRNA-Asp, -Asn, -His and -Tyr), resulting in the hypermodified nucleoside queuosine (7-(((4,5-cis-dihydroxy-2-cyclopenten-1-yl)amino)methyl)-7-deazaguanosine). The polypeptide is Queuine tRNA-ribosyltransferase accessory subunit 2 (Xenopus laevis (African clawed frog)).